The following is a 95-amino-acid chain: Small ribosomal subunit protein bS6 (95 aa).

Belongs to the bacterial ribosomal protein bS6 family.

Its function is as follows. Binds together with bS18 to 16S ribosomal RNA. The polypeptide is Small ribosomal subunit protein bS6 (Exiguobacterium sibiricum (strain DSM 17290 / CCUG 55495 / CIP 109462 / JCM 13490 / 255-15)).